A 411-amino-acid chain; its full sequence is Secretion apparatus protein BsaZ (411 aa).

The next 4 membrane-spanning stretches (helical) occupy residues Ile-28–Thr-48, Ile-80–Ser-100, Ala-137–Ala-157, and Ile-175–Leu-195. Positions Ala-341–Ala-411 are disordered. Positions Asp-370–Ala-404 are enriched in low complexity.

It belongs to the type III secretion exporter family.

The protein localises to the cell membrane. Part of the bsa type III secretion system, is involved in the intracellular replication of invading bacteria inside the host cell. Probably necessary for the lysis of the vacuole membrane and escape into the host cell cytoplasm. The sequence is that of Secretion apparatus protein BsaZ (bsaZ) from Burkholderia pseudomallei (strain 1026b).